Reading from the N-terminus, the 207-residue chain is C-type lectin domain family 2 member D (207 aa).

Residues 1 to 41 (MCVTKASLPMLSPTGSPQEVEVGKILQGKRHGTISPESCAK) lie on the Cytoplasmic side of the membrane. 2 positions are modified to phosphoserine: serine 7 and serine 12. A helical; Signal-anchor for type II membrane protein membrane pass occupies residues 42–62 (LYCYYGVIMVLTVAVIALSVA). Residues 63–207 (LSATKTEQIP…LHCQTPFFPS (145 aa)) lie on the Extracellular side of the membrane. Cysteine 80 and cysteine 91 are disulfide-bonded. Residues 87–202 (VENKCFYFSE…LNSYSLHCQT (116 aa)) enclose the C-type lectin domain. Asparagine 100 carries N-linked (GlcNAc...) asparagine glycosylation.

Homodimer; disulfide-linked. N-glycosylated. In terms of tissue distribution, detected in fetal heart, brain, lung, chondrocytes, perichondrium and osteoblasts, and in adult splenocytes, thymocytes, lymph-node cells, osteoblasts, growth plate chondrocytes and skeletal muscle overlying the bone (at protein level). Ubiquitous. Detected in thymus, bone marrow, lung, gut, heart, skeletal muscle, ovary, spleen, ileum, liver and kidney.

It localises to the cell membrane. Receptor for KLRB1B that protects target cells against natural killer cell-mediated lysis. Inhibits osteoclast formation. Binds high molecular weight sulfated glycosaminoglycans. In Mus musculus (Mouse), this protein is C-type lectin domain family 2 member D (Clec2d).